Reading from the N-terminus, the 69-residue chain is A-kinase anchor protein inhibitor 1 (69 aa).

The segment at Q39–K69 is disordered. Positions S41–D50 are enriched in basic and acidic residues.

Binds cAMP-dependent protein kinase (PKA). Interacts specifically with RII-regulatory subunits of PKA (PRKAR2A and PRKAR2B). Preferentially expressed in the neural tissues.

Functionally, protein kinase A (PKA)-binding protein. Binds to type II regulatory subunits of protein kinase A (PKA) and may block the A-kinase anchoring protein (AKAP)-mediated subcellular localization of PKA. This chain is A-kinase anchor protein inhibitor 1, found in Mus musculus (Mouse).